Here is a 266-residue protein sequence, read N- to C-terminus: NADP-dependent mannitol dehydrogenase (266 aa).

Asn-107 and Lys-140 together coordinate NADP(+). The Proton donor role is filled by Ser-159. Residues Tyr-174, Lys-178, Ile-206, and Thr-208 each coordinate NADP(+). The active-site Proton acceptor is Tyr-174. The active-site Lowers pKa of active site Tyr is Lys-178.

Belongs to the short-chain dehydrogenases/reductases (SDR) family. Homotetramer.

The catalysed reaction is D-mannitol + NADP(+) = D-fructose + NADPH + H(+). Its function is as follows. Catalyzes the interconversion between D-mannitol and D-fructose. Plays a key role in liamocins biosynthesis by providing the mannitol moity that is linked to 3,5-dihydroxydecanoic acid (provided by the HR-PKS PKS1) via ester bond formation catalyzed by the esterase EST1. This Aureobasidium melanogenum (Aureobasidium pullulans var. melanogenum) protein is NADP-dependent mannitol dehydrogenase.